The chain runs to 115 residues: Peptidyl-tRNA hydrolase (115 aa).

It belongs to the PTH2 family.

It localises to the cytoplasm. The enzyme catalyses an N-acyl-L-alpha-aminoacyl-tRNA + H2O = an N-acyl-L-amino acid + a tRNA + H(+). Its function is as follows. The natural substrate for this enzyme may be peptidyl-tRNAs which drop off the ribosome during protein synthesis. The protein is Peptidyl-tRNA hydrolase of Methanosarcina acetivorans (strain ATCC 35395 / DSM 2834 / JCM 12185 / C2A).